We begin with the raw amino-acid sequence, 273 residues long: MALKNFNPITPSLRELVQVDKTNLWKGRPLKTLTKGMSKTGGRNQQGRITSWHRGGGHKKLYRVIDFKRKKIDISAIVERIEYDPNRTAFIALIKYDDGEYSYILAPQKLSIGDRVISSQAADIKIGNCLPLKSIPIGTTLHNVEMKIGKGGQIARSAGTSVELVGKDSGYAQIKLRSGEFRLVPLDCKATIGSISNPDQKNINLGKAGRNRWLGWRPHVRGVAMNPVDHPHGGGEGKTSGGRHPVTPWGFSTKGKKTRKNKRTSKFIVKKRK.

The segment at V228 to K273 is disordered. Over residues K254–K273 the composition is skewed to basic residues.

Belongs to the universal ribosomal protein uL2 family. In terms of assembly, part of the 50S ribosomal subunit. Forms a bridge to the 30S subunit in the 70S ribosome.

Its function is as follows. One of the primary rRNA binding proteins. Required for association of the 30S and 50S subunits to form the 70S ribosome, for tRNA binding and peptide bond formation. It has been suggested to have peptidyltransferase activity; this is somewhat controversial. Makes several contacts with the 16S rRNA in the 70S ribosome. The polypeptide is Large ribosomal subunit protein uL2 (Rickettsia prowazekii (strain Madrid E)).